The chain runs to 505 residues: MLFLNAKFIDLDLGANAVIVNEEDLKGTSYYPQDRVLIESHSGSVLGILYSTKTMVQKGEVGIPVRKMKGISLKEGEEVNLRHAEKPESIQFIKKKMDGQVLSPNEIRTIIDEIVSKKLSNIELAAFVTSTYVNGMNMEEIVEMTKRMAETGDMISWEKSLVVDIHSIGGVPGNKYALLSIPILAAAGITIPKTSSRAITSPAGTADVMEVLTNVELDEEELKRVVKATNGCLVWGGGVNLAPADDIIINVERPVSIDPQPQLLASVMAKKVATGIKYAVIDIPVGKGVKIKNEAEGAKLARKFIELGELLNIRVECVLTYGGQPLGRAIGPALEAKEALEALTDPKSAPKSLIEKAISLAGILLELGGSAQIGDGQKLAWEILESGRALEKFNQIIVEQGGTPKKPEEIELGKYVEEVRSPIDGYIVGINNTSITNVVKEAGAPRDKKAGLLLNAKIGNKVKRGDILYTIYSGSEERLNSAVNLARRVYPVNVEGMMIERISKF.

AMP contacts are provided by residues Gly-170, 196–201, and Thr-205; that span reads SRAITS. Asp-258 functions as the Proton donor in the catalytic mechanism. Residues Ser-266 and Lys-290 each contribute to the AMP site.

It belongs to the thymidine/pyrimidine-nucleoside phosphorylase family. Type 2 subfamily.

It carries out the reaction AMP + phosphate = alpha-D-ribose 1,5-bisphosphate + adenine. It catalyses the reaction CMP + phosphate = cytosine + alpha-D-ribose 1,5-bisphosphate. The enzyme catalyses UMP + phosphate = alpha-D-ribose 1,5-bisphosphate + uracil. Its function is as follows. Catalyzes the conversion of AMP and phosphate to adenine and ribose 1,5-bisphosphate (R15P). Exhibits phosphorylase activity toward CMP and UMP in addition to AMP. Functions in an archaeal AMP degradation pathway, together with R15P isomerase and RubisCO. The protein is AMP phosphorylase of Methanococcus vannielii (strain ATCC 35089 / DSM 1224 / JCM 13029 / OCM 148 / SB).